The following is a 539-amino-acid chain: Dihydrolipoyllysine-residue acetyltransferase component 2 of pyruvate dehydrogenase complex, mitochondrial (539 aa).

A mitochondrion-targeting transit peptide spans Met-1 to Phe-102. A disordered region spans residues Phe-102–Thr-122. Positions His-111–Val-187 constitute a Lipoyl-binding domain. Lys-152 carries the N6-lipoyllysine modification. A disordered region spans residues Phe-196–Glu-244. Residues Phe-248–Leu-285 form the Peripheral subunit-binding (PSBD) domain. Active-site residues include His-512 and Asp-516.

Belongs to the 2-oxoacid dehydrogenase family. It depends on (R)-lipoate as a cofactor.

The protein resides in the mitochondrion matrix. The catalysed reaction is N(6)-[(R)-dihydrolipoyl]-L-lysyl-[protein] + acetyl-CoA = N(6)-[(R)-S(8)-acetyldihydrolipoyl]-L-lysyl-[protein] + CoA. Its function is as follows. The pyruvate dehydrogenase complex catalyzes the overall conversion of pyruvate to acetyl-CoA and CO(2). It contains multiple copies of three enzymatic components: pyruvate dehydrogenase (E1), dihydrolipoamide acetyltransferase (E2) and lipoamide dehydrogenase (E3). The polypeptide is Dihydrolipoyllysine-residue acetyltransferase component 2 of pyruvate dehydrogenase complex, mitochondrial (Arabidopsis thaliana (Mouse-ear cress)).